A 1941-amino-acid polypeptide reads, in one-letter code: Xin actin-binding repeat-containing protein 1 (1941 aa).

The segment at 1-41 (MAEPQKSSKVAIKKMEDDLPPPPIPDSIQVIAPASQDPNPL) is disordered. 27 Xin repeats span residues 108-123 (GEVQ…WALD), 143-158 (GDVK…QSVN), 176-191 (GDVH…QPLD), 215-230 (GDVK…QSLD), 255-270 (GDVK…EPLC), 293-308 (NAVR…QPLD), 331-346 (PDVS…QPLD), 368-383 (ADVT…QALD), 402-417 (GDVK…QPME), 439-454 (GDVK…CPLG), 475-490 (GDVK…LPLD), 510-525 (GNVK…TPLY), 548-563 (GDVK…RPLD), 586-601 (GDVR…QPMD), 624-639 (GDVK…QPMH), 658-673 (ADVK…QPLD), 697-712 (VDVK…EPLG), 736-751 (GEVS…KPLD), 769-784 (GSVH…YPMD), 805-820 (GDVG…YSLD), 842-857 (ANVK…QPLY), 880-895 (GDVK…KPLD), 917-932 (GDVQ…EPLD), 951-966 (GDVQ…QQVG), 982-997 (GDVR…QPVD), 1020-1035 (GDVK…QPMD), and 1055-1070 (ADVK…TPLD). Residues 1514–1565 (ASKQETKTLQSTIHQQESASTMRENTSTAIRTSTTRVQEASRTHTSVSQKSI) are compositionally biased toward polar residues. Disordered stretches follow at residues 1514 to 1568 (ASKQ…IASH), 1715 to 1856 (ASGS…PPPA), and 1914 to 1941 (YKAR…GEVG). Positions 1820 to 1833 (SASTNNSTNRSTKS) are enriched in low complexity. Positions 1834 to 1843 (VPPPVPPKPP) are enriched in pro residues.

Belongs to the Xin family. As to expression, expressed at intercalated disks in the heart (at protein level).

It is found in the cell junction. The protein localises to the adherens junction. Its subcellular location is the desmosome. Functionally, involved in cardiac morphogenesis, including heart midline formation, cardiac tubule looping, myocardial formation and maintenance of heart beat speed and rhythm. May protect actin filaments from depolymerization. May play a role in development of normal skeletal muscle morphology, muscle fiber type composition and regulation of muscle satellite cell activation and survival. This chain is Xin actin-binding repeat-containing protein 1, found in Gallus gallus (Chicken).